Here is a 412-residue protein sequence, read N- to C-terminus: ORC1-type DNA replication protein 2 (412 aa).

ATP contacts are provided by residues 61-65 (VGKTA), Tyr-207, and Arg-219.

It belongs to the CDC6/cdc18 family.

Its function is as follows. Involved in regulation of DNA replication. This is ORC1-type DNA replication protein 2 (cdc6b) from Haloarcula marismortui (strain ATCC 43049 / DSM 3752 / JCM 8966 / VKM B-1809) (Halobacterium marismortui).